The chain runs to 594 residues: Frizzled and smoothened-like protein A (594 aa).

Positions 1–22 (MVDIRKSLFFIIFFIFYNYVNS) are cleaved as a signal peptide. Over 23 to 248 (QKAINSDAFC…NEWYQFKDLT (226 aa)) the chain is Extracellular. In terms of domain architecture, FZ spans 27–173 (NSDAFCQKKT…SNYDLQCLNI (147 aa)). Intrachain disulfides connect Cys32–Cys98 and Cys41–Cys91. Residues Asn55 and Asn106 are each glycosylated (N-linked (GlcNAc...) asparagine). Cys117 and Cys170 are joined by a disulfide. N-linked (GlcNAc...) asparagine glycans are attached at residues Asn182, Asn189, Asn195, and Asn206. Residues 249 to 269 (TVTGVISFVCIFFNIFIYGFL) traverse the membrane as a helical segment. At 270 to 277 (NKKHDRHT) the chain is on the cytoplasmic side. Residues 278–298 (IGILCLSFSLWCCMLSDLIVA) traverse the membrane as a helical segment. The Extracellular portion of the chain corresponds to 299 to 329 (SSPDYSLVCPEPGRFARIHDSRCVANGIIFQ). The helical transmembrane segment at 330–350 (WGAVCTTMFWSAMAIDLYLVI) threads the bilayer. At 351-361 (KKLSLPAFTVK) the chain is on the cytoplasmic side. Residues 362–382 (YFVAAIFTLALLFTTVPLAWD) form a helical membrane-spanning segment. Over 383–403 (DYGYGFGGVGCWIMSNSVQNG) the chain is Extracellular. A helical transmembrane segment spans residues 404 to 424 (CFWIPMLICLLIGAVSICLII). The Cytoplasmic portion of the chain corresponds to 425-448 (YEIVKVFKNVGRSGISIILANARL). A helical membrane pass occupies residues 449–469 (FGIVSFIFIEYIYLFVYHFWV). Residues 470-507 (QENTEKFTQNITDWVICVQTTGSSDGCPLPKAVPYATQ) lie on the Extracellular side of the membrane. N-linked (GlcNAc...) asparagine glycosylation is present at Asn479. Residues 508 to 528 (FIFLFFLRLLGIEVCIFYGIN) form a helical membrane-spanning segment. The Cytoplasmic segment spans residues 529–594 (SRSKNIILES…SKNGGDDDDL (66 aa)).

The protein belongs to the G-protein coupled receptor Fz/Smo family.

It is found in the membrane. The sequence is that of Frizzled and smoothened-like protein A (fslA) from Dictyostelium discoideum (Social amoeba).